The sequence spans 420 residues: 3-phosphoshikimate 1-carboxyvinyltransferase (420 aa).

The segment at 1 to 24 (MTRTAKLTIIPPGRPLSGRAMPPG) is disordered. Lys-26, Ser-27, and Arg-31 together coordinate 3-phosphoshikimate. Lys-26 lines the phosphoenolpyruvate pocket. Phosphoenolpyruvate is bound by residues Gly-97 and Arg-125. Positions 170, 171, 172, 297, 320, and 324 each coordinate 3-phosphoshikimate. Gln-172 provides a ligand contact to phosphoenolpyruvate. Asp-297 acts as the Proton acceptor in catalysis. Residues Arg-328, Arg-375, and Lys-400 each contribute to the phosphoenolpyruvate site.

The protein belongs to the EPSP synthase family. In terms of assembly, monomer.

Its subcellular location is the cytoplasm. It catalyses the reaction 3-phosphoshikimate + phosphoenolpyruvate = 5-O-(1-carboxyvinyl)-3-phosphoshikimate + phosphate. The protein operates within metabolic intermediate biosynthesis; chorismate biosynthesis; chorismate from D-erythrose 4-phosphate and phosphoenolpyruvate: step 6/7. Functionally, catalyzes the transfer of the enolpyruvyl moiety of phosphoenolpyruvate (PEP) to the 5-hydroxyl of shikimate-3-phosphate (S3P) to produce enolpyruvyl shikimate-3-phosphate and inorganic phosphate. The protein is 3-phosphoshikimate 1-carboxyvinyltransferase of Rhizobium etli (strain CIAT 652).